Reading from the N-terminus, the 544-residue chain is Chaperonin GroEL (544 aa).

ATP contacts are provided by residues 29-32 (TLGP), 86-90 (DGTTT), glycine 413, 476-478 (NAA), and aspartate 492.

Belongs to the chaperonin (HSP60) family. In terms of assembly, forms a cylinder of 14 subunits composed of two heptameric rings stacked back-to-back. Interacts with the co-chaperonin GroES.

It is found in the cytoplasm. It catalyses the reaction ATP + H2O + a folded polypeptide = ADP + phosphate + an unfolded polypeptide.. Functionally, together with its co-chaperonin GroES, plays an essential role in assisting protein folding. The GroEL-GroES system forms a nano-cage that allows encapsulation of the non-native substrate proteins and provides a physical environment optimized to promote and accelerate protein folding. The chain is Chaperonin GroEL from Bacillus thuringiensis (strain Al Hakam).